The primary structure comprises 608 residues: Alpha-1,3-galactosidase A (608 aa).

Positions 1 to 21 (MQRRTFIKSISAMMATSTTLG) are cleaved as a signal peptide. A lipid anchor (N-palmitoyl cysteine) is attached at cysteine 22. A lipid anchor (S-diacylglycerol cysteine) is attached at cysteine 22. 5 PbH1 repeats span residues 262 to 292 (TKNT…KLDN), 318 to 340 (KGHV…NVHG), 426 to 448 (PDHV…LLTV), 449 to 470 (SGKI…KIGS), and 481 to 507 (VESV…DIVP).

It belongs to the glycosyl hydrolase 110 family. A subfamily.

The protein resides in the cell membrane. The enzyme catalyses Hydrolysis of terminal, non-reducing branched (1-&gt;3)-alpha-D-galactosidic residues, producing free D-galactose.. It catalyses the reaction Hydrolysis of terminal, non-reducing alpha-D-galactose residues in alpha-D-galactosides, including galactose oligosaccharides, galactomannans and galactolipids.. In terms of biological role, alpha-galactosidase that specifically removes branched alpha-1,3-linked galactose residues present in blood group B antigens. Has no activity toward linear alpha-1,3-linked galactose residues. This chain is Alpha-1,3-galactosidase A (glaA), found in Shewanella woodyi (strain ATCC 51908 / MS32).